Consider the following 344-residue polypeptide: Uroporphyrinogen decarboxylase (344 aa).

Substrate-binding positions include 26 to 30, F45, D75, Y151, S206, and H320; that span reads RQAGR.

The protein belongs to the uroporphyrinogen decarboxylase family. As to quaternary structure, homodimer.

Its subcellular location is the cytoplasm. It carries out the reaction uroporphyrinogen III + 4 H(+) = coproporphyrinogen III + 4 CO2. It participates in porphyrin-containing compound metabolism; protoporphyrin-IX biosynthesis; coproporphyrinogen-III from 5-aminolevulinate: step 4/4. Its function is as follows. Catalyzes the decarboxylation of four acetate groups of uroporphyrinogen-III to yield coproporphyrinogen-III. This chain is Uroporphyrinogen decarboxylase, found in Staphylococcus epidermidis (strain ATCC 35984 / DSM 28319 / BCRC 17069 / CCUG 31568 / BM 3577 / RP62A).